A 589-amino-acid polypeptide reads, in one-letter code: MMSYEGNGDGVAISTENHNENYISLESSPFHEDSKSRESHDLKKDSSKISEKDNENGRDKDGNKDRDREKDRDREKSRDRDREKSRDRDRDRERSKDRQRDRHHRDRHRDRSRERSEKRDDLDDDHHRRSRDRDRRRSRDRDREVRHRRRSRSRSRSRSERRSRSEHRHKSEHRSRSRSRSRSKSKRRSGFDMAPPDMLAATAVAAAGQVPSVPTTATIPGMFSNMFPMVPGQQLGALPVLPVQAMTQQATRHARRVYVGGLPPTANEQSVSTFFSQVMSAIGGNTAGPGDAVVNVYINHEKKFAFVEMRSVEEASNAMALDGIILEGVPVKVRRPTDYNPSLAATLGPSQPNPNLNLGAVGLSSGSTGGLEGPDRIFVGGLPYYFTEVQIRELLESFGPLRGFNLVKDRETGNSKGYAFCVYQDPSVTDIACAALNGIKMGDKTLTVRRAIQGAIQPKPEQEEVLLYAQQQIALQRLMFQPGGTPTKIVCLTQVVTADDLRDDEEYAEIMEDMRQEGGKFGNLVNVVIPRPNPDHDPTPGVGKVFLEYADVDGSSKARSGMNGRKFGGNQVVAVYYPEDKYAQGDYED.

The disordered stretch occupies residues 1-195 (MMSYEGNGDG…KRRSGFDMAP (195 aa)). Positions 14–27 (STENHNENYISLES) are enriched in polar residues. 2 stretches are compositionally biased toward basic and acidic residues: residues 29–100 (PFHE…DRQR) and 109–145 (RDRSRERSEKRDDLDDDHHRRSRDRDRRRSRDRDREV). Basic residues-rich tracts occupy residues 146–156 (RHRRRSRSRSR) and 164–188 (RSEHRHKSEHRSRSRSRSRSKSKRR). 3 RRM domains span residues 255 to 338 (RRVY…RPTD), 375 to 453 (DRIF…RAIQ), and 494 to 580 (QVVT…YPED).

The protein belongs to the splicing factor SR family. As to quaternary structure, component of the spliceosome. Interacts with SF1 in the nucleus.

Its subcellular location is the nucleus. It localises to the nucleus speckle. Functionally, necessary for the splicing of pre-mRNA. This Arabidopsis thaliana (Mouse-ear cress) protein is Splicing factor U2af large subunit B.